A 133-amino-acid chain; its full sequence is ATP synthase epsilon chain, chloroplastic (133 aa).

It belongs to the ATPase epsilon chain family. In terms of assembly, F-type ATPases have 2 components, CF(1) - the catalytic core - and CF(0) - the membrane proton channel. CF(1) has five subunits: alpha(3), beta(3), gamma(1), delta(1), epsilon(1). CF(0) has three main subunits: a, b and c.

The protein resides in the plastid. Its subcellular location is the chloroplast thylakoid membrane. In terms of biological role, produces ATP from ADP in the presence of a proton gradient across the membrane. The protein is ATP synthase epsilon chain, chloroplastic of Jasminum nudiflorum (Winter jasmine).